Consider the following 123-residue polypeptide: Protein Wnt-7b (123 aa).

Ser1 carries O-palmitoleoyl serine; by PORCN lipidation. Residues 33-61 (VEAVRATRLRQPTFLKIKKPRTYRKPMVT) form a disordered linker region. Cysteines 89 and 104 form a disulfide. An N-linked (GlcNAc...) asparagine glycan is attached at Asn90.

It belongs to the Wnt family. In terms of processing, palmitoleoylation is required for efficient binding to frizzled receptors. Depalmitoleoylation leads to Wnt signaling pathway inhibition.

It is found in the secreted. The protein resides in the extracellular space. The protein localises to the extracellular matrix. Functionally, ligand for members of the frizzled family of seven transmembrane receptors that functions in the canonical Wnt/beta-catenin signaling pathway. Required for normal fusion of the chorion and the allantois during placenta development. Required for central nervous system (CNS) angiogenesis and blood-brain barrier regulation. This is Protein Wnt-7b (WNT-7B) from Alopias vulpinus (Common thresher shark).